Consider the following 343-residue polypeptide: Ferredoxin--NADP reductase (343 aa).

Positions 31, 39, 43, 83, 118, 285, and 326 each coordinate FAD.

This sequence belongs to the ferredoxin--NADP reductase type 2 family. Homodimer. FAD serves as cofactor.

It catalyses the reaction 2 reduced [2Fe-2S]-[ferredoxin] + NADP(+) + H(+) = 2 oxidized [2Fe-2S]-[ferredoxin] + NADPH. The protein is Ferredoxin--NADP reductase of Staphylococcus saprophyticus subsp. saprophyticus (strain ATCC 15305 / DSM 20229 / NCIMB 8711 / NCTC 7292 / S-41).